Here is a 154-residue protein sequence, read N- to C-terminus: Ribosome maturation factor RimP (154 aa).

The protein belongs to the RimP family.

The protein localises to the cytoplasm. Its function is as follows. Required for maturation of 30S ribosomal subunits. This is Ribosome maturation factor RimP from Thioalkalivibrio sulfidiphilus (strain HL-EbGR7).